Reading from the N-terminus, the 546-residue chain is Chaperonin GroEL 4 (546 aa).

ATP is bound by residues 30 to 33 (TLGP), Lys-51, 87 to 91 (DGTTT), Gly-415, and Asp-495. The interval 524–546 (APKDTPAAGQPGGPGAGGPGLDF) is disordered. Residues 533–546 (QPGGPGAGGPGLDF) are compositionally biased toward gly residues.

This sequence belongs to the chaperonin (HSP60) family. In terms of assembly, forms a cylinder of 14 subunits composed of two heptameric rings stacked back-to-back. Interacts with the co-chaperonin GroES.

It localises to the cytoplasm. It carries out the reaction ATP + H2O + a folded polypeptide = ADP + phosphate + an unfolded polypeptide.. Functionally, together with its co-chaperonin GroES, plays an essential role in assisting protein folding. The GroEL-GroES system forms a nano-cage that allows encapsulation of the non-native substrate proteins and provides a physical environment optimized to promote and accelerate protein folding. The protein is Chaperonin GroEL 4 of Paraburkholderia xenovorans (strain LB400).